The chain runs to 343 residues: Aspartate beta-hydroxylase domain-containing protein 2 (343 aa).

Over 1 to 31 (MWLEWLVAWSWSLDGLRDCIATGIQSVRDCD) the chain is Cytoplasmic. The helical transmembrane segment at 32–52 (GTAVITVACLLVLFVWYCYHV) threads the bilayer. Residues 53 to 343 (GREQPRPHVS…ALDFIFAPGR (291 aa)) are Lumenal-facing. Asparagine 77 and asparagine 185 each carry an N-linked (GlcNAc...) asparagine glycan. 2-oxoglutarate contacts are provided by tryptophan 202 and serine 246. Histidine 257 is a Fe cation binding site. 266–268 (RCH) contacts 2-oxoglutarate. Residue histidine 302 participates in Fe cation binding. Residue arginine 315 coordinates 2-oxoglutarate.

The protein belongs to the aspartyl/asparaginyl beta-hydroxylase family. Fe cation serves as cofactor.

The protein resides in the membrane. Functionally, may function as 2-oxoglutarate-dependent dioxygenase. This is Aspartate beta-hydroxylase domain-containing protein 2 (Asphd2) from Rattus norvegicus (Rat).